The chain runs to 143 residues: Putative transcriptional regulatory protein PH0763 (143 aa).

Belongs to the Tfx family.

Its function is as follows. Putative transcriptional regulator. The chain is Putative transcriptional regulatory protein PH0763 from Pyrococcus horikoshii (strain ATCC 700860 / DSM 12428 / JCM 9974 / NBRC 100139 / OT-3).